Here is a 365-residue protein sequence, read N- to C-terminus: tRNA N6-adenosine threonylcarbamoyltransferase (365 aa).

His-119 and His-123 together coordinate Fe cation. Substrate-binding positions include 141 to 145 (LVSGG), Asp-174, Gly-187, and Asn-289. Position 317 (Asp-317) interacts with Fe cation. Positions 341-365 (SARPRWPLDKTSPALIGSGKKGAKA) are disordered.

Belongs to the KAE1 / TsaD family. Requires Fe(2+) as cofactor.

It is found in the cytoplasm. It carries out the reaction L-threonylcarbamoyladenylate + adenosine(37) in tRNA = N(6)-L-threonylcarbamoyladenosine(37) in tRNA + AMP + H(+). Its function is as follows. Required for the formation of a threonylcarbamoyl group on adenosine at position 37 (t(6)A37) in tRNAs that read codons beginning with adenine. Is involved in the transfer of the threonylcarbamoyl moiety of threonylcarbamoyl-AMP (TC-AMP) to the N6 group of A37, together with TsaE and TsaB. TsaD likely plays a direct catalytic role in this reaction. This Ruegeria sp. (strain TM1040) (Silicibacter sp.) protein is tRNA N6-adenosine threonylcarbamoyltransferase.